Reading from the N-terminus, the 676-residue chain is MSPLALIVLLAWHATAFKSTDTIEVIPLPHTSGFYYQPINRMQFVEDVWHFIIEVDHGVIFQELDELYRDTLHLLNHTRSSKFVSANCTTNAIIESEINTYILKRILYLVQQHNTIDDKIKANAEGDAPDSRWELNTKDPLAPRRKRGVLNFVGTVDKFLFGVMDSNDARELHDLAKTSNALNEQIKEVTDELVNIAKFEEHKQCLERQRDDLCGYATAKMALITEQLTQLDLLYTNLDRAVDDALDNRINSLIMTPQRLYEEMTNVTVHVPTKLTWPVPLKKTNMHDLINDKIVKTHVFKLERRKLIFILEVPLIDDQNYDVYQVIPIPLCGGDGKCAVIVPDSKYLGVSTNKRNYVRLEDDAPKACKMTSKNLLCFKPKVVHVSSEATLCDIKILLHYENSYENVQRDCDVRVGKFDPEIFHLISDYNNWLYVLQRDTELTMDCADASSASNVIRIAAGTGIIRGRNVTRSCNLMTKSKQLALHQLKNSLFSVSAVPLSTSFNLSAALGDLDRLEIESMKNNADLDHKHLQGATQRLIDLRKRMNNNSVFHGAELEGEASDGWFCWLVGWLNIKCATAEAVVACVVLFLVALLLFRIYRFCCPGTCSAMFSCCRFDALSSVPRRRNKTKSSVIRVNSQLQYLDGGGGGEKSHEETPMVMFNNRARDPNVVFKNI.

The first 16 residues, 1 to 16 (MSPLALIVLLAWHATA), serve as a signal peptide directing secretion. Residues Asn-76 and Asn-87 are each glycosylated (N-linked (GlcNAc...) asparagine; by host). A coiled-coil region spans residues 169–215 (ARELHDLAKTSNALNEQIKEVTDELVNIAKFEEHKQCLERQRDDLCG). Residues Asn-266, Asn-469, Asn-505, and Asn-548 are each glycosylated (N-linked (GlcNAc...) asparagine; by host). A helical transmembrane segment spans residues 577 to 597 (CATAEAVVACVVLFLVALLLF). A glycan (N-linked (GlcNAc...) asparagine; by host) is linked at Asn-628.

Post-translationally, N-glycosylated.

The protein resides in the virion membrane. It is found in the host cell membrane. Its function is as follows. Envelope glycoprotein which mediates the fusion of viral and host endosomal membranes leading to virus entry into the host cell. This Lepidoptera (butterflies and moths) protein is Envelope fusion protein.